Reading from the N-terminus, the 706-residue chain is Probable N(6)-adenosine-methyltransferase MT-A70-like (706 aa).

Disordered regions lie at residues 64-114 and 223-261; these read RPFV…VAAA and TLPL…PDMW. Low complexity predominate over residues 103 to 114; sequence SPGSSPASVAAA. Positions 227–236 are enriched in pro residues; it reads LQPPPAPQMP. S-adenosyl-L-methionine is bound by residues 479–480 and aspartate 497; that span reads DI. Residues 567–580 are positively charged region required for RNA-binding; that stretch reads RIIRTGRTGHWLNH. Residues lysine 614, 637–640, and 650–651 each bind S-adenosyl-L-methionine; these read RMHN and NQ. Positions 669 to 706 are disordered; sequence AYPDSEVQPPSPPRASAPIDGDQGTSQKPTVSDGERPA.

This sequence belongs to the MT-A70-like family.

It is found in the nucleus. The catalysed reaction is an adenosine in mRNA + S-adenosyl-L-methionine = an N(6)-methyladenosine in mRNA + S-adenosyl-L-homocysteine + H(+). In terms of biological role, probable N6-methyltransferase that methylates adenosine residues of some mRNAs. N6-methyladenosine (m6A), which is present at internal sites of some mRNAs, may play a role in the efficiency of mRNA splicing, transport or translation. The polypeptide is Probable N(6)-adenosine-methyltransferase MT-A70-like (Oryza sativa subsp. japonica (Rice)).